An 86-amino-acid chain; its full sequence is Toxin Aam3 (86 aa).

A signal peptide spans 1–19 (MNYLVMISLALLFMIGVES). Positions 21–85 (RDGYIAQPNN…PIKIIGQKCT (65 aa)) constitute an LCN-type CS-alpha/beta domain. Disulfide bonds link Cys31/Cys84, Cys35/Cys56, Cys42/Cys66, and Cys46/Cys68.

The protein belongs to the long (4 C-C) scorpion toxin superfamily. Sodium channel inhibitor family. Alpha subfamily. In terms of processing, the C-terminal basic residue is removed by a carboxypeptidase. In terms of tissue distribution, expressed by the venom gland.

The protein resides in the secreted. Alpha toxins bind voltage-independently at site-3 of sodium channels (Nav) and inhibit the inactivation of the activated channels, thereby blocking neuronal transmission. This Androctonus amoreuxi (African fattail scorpion) protein is Toxin Aam3.